The primary structure comprises 500 residues: Small ribosomal subunit protein uS3m (500 aa).

The protein belongs to the universal ribosomal protein uS3 family.

Its subcellular location is the mitochondrion. This is Small ribosomal subunit protein uS3m (RPS3) from Prototheca wickerhamii.